We begin with the raw amino-acid sequence, 802 residues long: Penicillin G acylase (802 aa).

An N-terminal signal peptide occupies residues 1 to 26 (MKMKWLISVIILFVFIFPQNLVFAGE). E177 contacts Ca(2+). The propeptide at 235–265 (SAVIKASEKVGKERENFVQSSEELGLPLKIG) is spacer peptide. S266 serves as the catalytic Nucleophile. D341 lines the Ca(2+) pocket.

Belongs to the peptidase S45 family. As to quaternary structure, heterodimer of an alpha subunit and a beta subunit processed from the same precursor. The cofactor is Ca(2+).

It localises to the secreted. The enzyme catalyses a penicillin + H2O = 6-aminopenicillanate + a carboxylate. This Rhizobium viscosum (Arthrobacter viscosus) protein is Penicillin G acylase (pac).